A 96-amino-acid chain; its full sequence is Co-chaperonin GroES (96 aa).

This sequence belongs to the GroES chaperonin family. Heptamer of 7 subunits arranged in a ring. Interacts with the chaperonin GroEL.

It localises to the cytoplasm. Functionally, together with the chaperonin GroEL, plays an essential role in assisting protein folding. The GroEL-GroES system forms a nano-cage that allows encapsulation of the non-native substrate proteins and provides a physical environment optimized to promote and accelerate protein folding. GroES binds to the apical surface of the GroEL ring, thereby capping the opening of the GroEL channel. The chain is Co-chaperonin GroES from Neisseria gonorrhoeae (strain ATCC 700825 / FA 1090).